Reading from the N-terminus, the 226-residue chain is Ribose-5-phosphate isomerase A (226 aa).

Substrate is bound by residues 26 to 29 (TGST), 82 to 85 (DGAD), and 95 to 98 (KGGG). Glu-104 serves as the catalytic Proton acceptor. Lys-122 provides a ligand contact to substrate.

The protein belongs to the ribose 5-phosphate isomerase family. Homodimer.

The catalysed reaction is aldehydo-D-ribose 5-phosphate = D-ribulose 5-phosphate. It participates in carbohydrate degradation; pentose phosphate pathway; D-ribose 5-phosphate from D-ribulose 5-phosphate (non-oxidative stage): step 1/1. Catalyzes the reversible conversion of ribose-5-phosphate to ribulose 5-phosphate. This Streptococcus thermophilus (strain CNRZ 1066) protein is Ribose-5-phosphate isomerase A.